The primary structure comprises 623 residues: Glutathione import ATP-binding protein GsiA (623 aa).

ABC transporter domains are found at residues 15-269 (VENL…RALL) and 314-564 (LRVR…RKLL). ATP is bound by residues 49–56 (GESGSGKS) and 357–364 (GESGSGKS).

It belongs to the ABC transporter superfamily. Glutathione importer (TC 3.A.1.5.11) family. As to quaternary structure, the complex is composed of two ATP-binding proteins (GsiA), two transmembrane proteins (GsiC and GsiD) and a solute-binding protein (GsiB).

The protein resides in the cell inner membrane. The catalysed reaction is glutathione(out) + ATP + H2O = glutathione(in) + ADP + phosphate + H(+). Functionally, part of the ABC transporter complex GsiABCD involved in glutathione import. Responsible for energy coupling to the transport system. This chain is Glutathione import ATP-binding protein GsiA, found in Shigella flexneri.